A 191-amino-acid polypeptide reads, in one-letter code: uncharacterized protein (191 aa).

Residues 1–17 form the signal peptide; the sequence is MESIILSIAIFIGVLLG. The segment at 82 to 148 is disordered; that stretch reads TFSGSRTSPD…DVGAGSGSSI (67 aa). Residues 168-188 traverse the membrane as a helical segment; sequence VAVLITAAILSAPVTAIALLE.

Its subcellular location is the membrane. This is an uncharacterized protein from Saccharomyces cerevisiae (strain ATCC 204508 / S288c) (Baker's yeast).